Here is a 171-residue protein sequence, read N- to C-terminus: Urease accessory protein UreE (171 aa).

Residues 143-171 (SGGHQHHHGHDHDHGHHGHDHDHHHPDHE) are disordered. The segment covering 152-171 (HDHDHGHHGHDHDHHHPDHE) has biased composition (basic and acidic residues).

Belongs to the UreE family.

It is found in the cytoplasm. In terms of biological role, involved in urease metallocenter assembly. Binds nickel. Probably functions as a nickel donor during metallocenter assembly. The polypeptide is Urease accessory protein UreE (Brucella abortus biovar 1 (strain 9-941)).